The sequence spans 352 residues: Lipid storage droplets surface-binding protein 2 (352 aa).

Disordered stretches follow at residues 1–28 (MASAEQKHATGNGTTGNGTAMNDVDQPK) and 298–352 (NVEQ…VSSQ). The segment covering 298–309 (NVEQSGGSSSDA) has biased composition (polar residues). Over residues 315–329 (TTTSTTTTTTTSSTS) the composition is skewed to low complexity.

It belongs to the perilipin family. As to expression, ubiquitous expression in early embryos. At stage 5 expression is restricted to the pole cells. At stage 11 expression is seen in the amnioserosa, refined to the fat body and midgut by stage 14. Also seen in the hindgut by the end of embryogenesis. Expression is seen in larval fat body (at protein level).

It is found in the cytoplasm. Its subcellular location is the lipid droplet. Functionally, essential for embryogenesis. Required for normal deposition of neutral lipids in the oocyte. This Drosophila melanogaster (Fruit fly) protein is Lipid storage droplets surface-binding protein 2.